A 53-amino-acid chain; its full sequence is Mannose/glucose-specific lectin alpha chain (53 aa).

The protein belongs to the leguminous lectin family. Heterodimer of an alpha and a beta chain.

This lectin specifically binds mannose and glucose. The polypeptide is Mannose/glucose-specific lectin alpha chain (Vicia cracca (Bird vetch)).